Consider the following 864-residue polypeptide: Leucine--tRNA ligase (864 aa).

The 'HIGH' region motif lies at 42–52 (PYPSGRLHMGH). The short motif at 621-625 (KMSKS) is the 'KMSKS' region element. Lysine 624 provides a ligand contact to ATP.

This sequence belongs to the class-I aminoacyl-tRNA synthetase family.

It localises to the cytoplasm. The catalysed reaction is tRNA(Leu) + L-leucine + ATP = L-leucyl-tRNA(Leu) + AMP + diphosphate. In Alkalilimnicola ehrlichii (strain ATCC BAA-1101 / DSM 17681 / MLHE-1), this protein is Leucine--tRNA ligase.